Reading from the N-terminus, the 88-residue chain is Small ribosomal subunit protein bS18B (88 aa).

It belongs to the bacterial ribosomal protein bS18 family. As to quaternary structure, part of the 30S ribosomal subunit. Forms a tight heterodimer with protein bS6.

Its function is as follows. Binds as a heterodimer with protein bS6 to the central domain of the 16S rRNA, where it helps stabilize the platform of the 30S subunit. The protein is Small ribosomal subunit protein bS18B of Mycolicibacterium paratuberculosis (strain ATCC BAA-968 / K-10) (Mycobacterium paratuberculosis).